We begin with the raw amino-acid sequence, 161 residues long: Phosphopantetheine adenylyltransferase (161 aa).

Position 9 (threonine 9) interacts with substrate. Residues 9-10 (TF) and histidine 17 each bind ATP. Substrate is bound by residues lysine 41, leucine 73, and arginine 87. ATP is bound by residues 88-90 (GLR), glutamate 98, and 123-129 (LSYISST).

Belongs to the bacterial CoaD family. Homohexamer. The cofactor is Mg(2+).

It is found in the cytoplasm. The enzyme catalyses (R)-4'-phosphopantetheine + ATP + H(+) = 3'-dephospho-CoA + diphosphate. Its pathway is cofactor biosynthesis; coenzyme A biosynthesis; CoA from (R)-pantothenate: step 4/5. Reversibly transfers an adenylyl group from ATP to 4'-phosphopantetheine, yielding dephospho-CoA (dPCoA) and pyrophosphate. This Hahella chejuensis (strain KCTC 2396) protein is Phosphopantetheine adenylyltransferase.